Here is a 199-residue protein sequence, read N- to C-terminus: MEKLSFEEGKFAVKFARINIECYLSGVHYVVDDLPPIFKKPRGVFTTLYTYPKRNLRGCIGIPEPVMPLIDALKEASISASVDDPRFPPVGRMELRDITIEISILTPPKLVEANSPADYLEKIKVGRDGLIIEYGTYRGLLLPQVPIEHNWDIGEYLANLCLKAGLPVDTWIKKKVNIYSFESQIFKELSPNGKIVEEK.

The AMMECR1 domain maps to 7–197 (EEGKFAVKFA…ELSPNGKIVE (191 aa)).

In Methanococcus aeolicus (strain ATCC BAA-1280 / DSM 17508 / OCM 812 / Nankai-3), this protein is Protein Maeo_0138.